The chain runs to 386 residues: Putative F-box/kelch-repeat protein At3g17280 (386 aa).

An F-box domain is found at 1 to 48; the sequence is MTTISDLPYDLLPEILSRLPTKSIPKLKTTCKKWYALFKDPKFVEKKL. Kelch repeat units follow at residues 155–203 and 340–386; these read SYKI…LKES and RIYI…IVEV.

This Arabidopsis thaliana (Mouse-ear cress) protein is Putative F-box/kelch-repeat protein At3g17280.